A 490-amino-acid chain; its full sequence is Cis-aconitate decarboxylase (490 aa).

This sequence belongs to the PrpD family. Homodimer.

The protein resides in the mitochondrion. It carries out the reaction cis-aconitate + H(+) = itaconate + CO2. Its function is as follows. Involved in the production of itaconic acid, a soluble unsaturated dicarboxylic acid mainly produced from sugars. The sequence is that of Cis-aconitate decarboxylase (cad1) from Aspergillus terreus (strain NIH 2624 / FGSC A1156).